Here is a 469-residue protein sequence, read N- to C-terminus: Glutamate--tRNA ligase 2 (469 aa).

Residues 11 to 21 (PSPTGHLHLGG) carry the 'HIGH' region motif. The short motif at 238 to 242 (KLSKR) is the 'KMSKS' region element. Lysine 241 lines the ATP pocket.

It belongs to the class-I aminoacyl-tRNA synthetase family. Glutamate--tRNA ligase type 1 subfamily. As to quaternary structure, monomer.

It localises to the cytoplasm. It carries out the reaction tRNA(Glu) + L-glutamate + ATP = L-glutamyl-tRNA(Glu) + AMP + diphosphate. Functionally, catalyzes the attachment of glutamate to tRNA(Glu) in a two-step reaction: glutamate is first activated by ATP to form Glu-AMP and then transferred to the acceptor end of tRNA(Glu). This chain is Glutamate--tRNA ligase 2, found in Ehrlichia chaffeensis (strain ATCC CRL-10679 / Arkansas).